A 409-amino-acid chain; its full sequence is Bone morphogenetic protein 4 (409 aa).

An N-terminal signal peptide occupies residues 1 to 24; it reads MIPGNRMLMVVLLCQVLLGGASHA. Residues 25–293 constitute a propeptide that is removed on maturation; the sequence is SLIPETGKKK…ALTRRRRAKR (269 aa). S91 is subject to Phosphoserine. N-linked (GlcNAc...) asparagine glycans are attached at residues N144 and N209. The disordered stretch occupies residues 284-308; sequence ALTRRRRAKRSPKHHPQRARKKNKN. Cystine bridges form between C309/C374, C338/C406, and C342/C408. Residues N351 and N366 are each glycosylated (N-linked (GlcNAc...) asparagine).

Belongs to the TGF-beta family. In terms of assembly, homodimer; disulfide-linked. Interacts with GREM2. Part of a complex consisting of TWSG1 and CHRD. Interacts with the serine proteases, HTRA1 and HTRA3; the interaction with either inhibits BMP4-mediated signaling. The HTRA protease activity is required for this inhibition. Interacts with SOSTDC1. Interacts with FBN1 (via N-terminal domain) and FBN2. Interacts with type I receptor BMPR1A. Interacts with type II receptor BMPR2. Interacts with FSTL1; this interaction inhibits the activation of the BMP4/Smad1/5/8 signaling pathway. Interacts with SCUBE3. Interacts with TGFBR3.

It localises to the secreted. It is found in the extracellular space. The protein resides in the extracellular matrix. Its function is as follows. Growth factor of the TGF-beta superfamily that plays essential roles in many developmental processes, including neurogenesis, vascular development, angiogenesis and osteogenesis. Acts in concert with PTHLH/PTHRP to stimulate ductal outgrowth during embryonic mammary development and to inhibit hair follicle induction. Initiates the canonical BMP signaling cascade by associating with type I receptor BMPR1A and type II receptor BMPR2. Once all three components are bound together in a complex at the cell surface, BMPR2 phosphorylates and activates BMPR1A. In turn, BMPR1A propagates signal by phosphorylating SMAD1/5/8 that travel to the nucleus and act as activators and repressors of transcription of target genes. Positively regulates the expression of odontogenic development regulator MSX1 via inducing the IPO7-mediated import of SMAD1 to the nucleus. Required for MSX1-mediated mesenchymal molar tooth bud development beyond the bud stage, via promoting Wnt signaling. Acts as a positive regulator of odontoblast differentiation during mesenchymal tooth germ formation, expression is repressed during the bell stage by MSX1-mediated inhibition of CTNNB1 signaling. Able to induce its own expression in dental mesenchymal cells and also in the neighboring dental epithelial cells via an MSX1-mediated pathway. Can also signal through non-canonical BMP pathways such as ERK/MAP kinase, PI3K/Akt, or SRC cascades. For example, induces SRC phosphorylation which, in turn, activates VEGFR2, leading to an angiogenic response. The sequence is that of Bone morphogenetic protein 4 from Bos taurus (Bovine).